A 72-amino-acid chain; its full sequence is uncharacterized protein (72 aa).

The helical transmembrane segment at 11-31 (WCCTVLSAFGVVILSVIAHLF) threads the bilayer.

It localises to the membrane. This is an uncharacterized protein from Saccharomyces cerevisiae (strain ATCC 204508 / S288c) (Baker's yeast).